The following is a 152-amino-acid chain: Chemokine-like factor (152 aa).

One can recognise an MARVEL domain in the interval 13 to 133 (FCFSVKGHVK…DGALIYRKLL (121 aa)). Helical transmembrane passes span 45–65 (YIVI…LYVL), 81–101 (IINS…ALIP), and 108–128 (VGGG…GALI).

This sequence belongs to the chemokine-like factor family. As to expression, isoform 1, isoform 2, isoform 3 and isoform 4 have highest expression levels in adult spleen, lung, testis, ovary, peripheral blood leukocyte, placenta, pancreas, and in fetal brain, skeletal muscle, thymus and heart. Lower expression levels in adult skeletal muscle, liver, thymus colon, prostate and fetal spleen and liver.

The protein resides in the secreted. It localises to the membrane. Its activity is regulated as follows. Partly inhibited by interleukin 10. Its function is as follows. May play an important role in inflammation and regeneration of skeletal muscle. Essential for embryonic development. Has chemotactic response in monocytes, neutrophils and lymphocytes. Binds CCR4. The sequence is that of Chemokine-like factor (CKLF) from Homo sapiens (Human).